The sequence spans 115 residues: Putative membrane protein insertion efficiency factor (115 aa).

A disordered region spans residues 81 to 115 (DPRPGRCGCKDAGPAVSAGSTEGNPGRRTDGTDPD). Basic and acidic residues predominate over residues 105 to 115 (PGRRTDGTDPD).

This sequence belongs to the UPF0161 family.

It is found in the cell inner membrane. Could be involved in insertion of integral membrane proteins into the membrane. This is Putative membrane protein insertion efficiency factor from Rhodospirillum rubrum (strain ATCC 11170 / ATH 1.1.1 / DSM 467 / LMG 4362 / NCIMB 8255 / S1).